We begin with the raw amino-acid sequence, 735 residues long: Rho GTPase-activating protein SYDE1 (735 aa).

3 disordered regions span residues 1–253, 601–655, and 669–706; these read MAEP…PYEV, PDTR…AGDW, and FLSG…FDAP. Positions 14-47 are enriched in basic and acidic residues; that stretch reads RGREKLPRKKSDAKDRGRPAQRSEPKPPEPEPRV. Over residues 151–160 the composition is skewed to low complexity; sequence PTKTSRTKSP. Phosphoserine is present on residues Ser224, Ser231, Ser235, and Ser244. One can recognise a C2 domain in the interval 249 to 366; the sequence is RPYEVGPSAR…FRGCQAQQLA (118 aa). A Rho-GAP domain is found at 398–604; it reads LPLQLLVERE…YLLQSWPDTR (207 aa). Residues 669–679 are compositionally biased toward basic and acidic residues; it reads FLSGPDYDHVT. 2 positions are modified to phosphoserine: Ser681 and Ser683.

Post-translationally, palmitoylated. Probably palmitoylated by ZDHHC3 and ZDHHC7.

Functionally, GTPase activator for the Rho-type GTPases. As a GCM1 downstream effector, it is involved in placental development and positively regulates trophoblast cells migration. It regulates cytoskeletal remodeling by controlling the activity of Rho GTPases including RHOA, CDC42 and RAC1. The sequence is that of Rho GTPase-activating protein SYDE1 (Syde1) from Rattus norvegicus (Rat).